The primary structure comprises 594 residues: UvrABC system protein C (594 aa).

A GIY-YIG domain is found at 13 to 99 (NGSGVYQYFD…IKQLKPKYNI (87 aa)). The region spanning 205–240 (DKLIKELQLKMDRLSSNLRFEEALIYRDRISKIQKI) is the UVR domain.

It belongs to the UvrC family. Interacts with UvrB in an incision complex.

Its subcellular location is the cytoplasm. Its function is as follows. The UvrABC repair system catalyzes the recognition and processing of DNA lesions. UvrC both incises the 5' and 3' sides of the lesion. The N-terminal half is responsible for the 3' incision and the C-terminal half is responsible for the 5' incision. This chain is UvrABC system protein C, found in Helicobacter acinonychis (strain Sheeba).